The chain runs to 226 residues: 2-C-methyl-D-erythritol 4-phosphate cytidylyltransferase (226 aa).

This sequence belongs to the IspD/TarI cytidylyltransferase family. IspD subfamily.

It catalyses the reaction 2-C-methyl-D-erythritol 4-phosphate + CTP + H(+) = 4-CDP-2-C-methyl-D-erythritol + diphosphate. The protein operates within isoprenoid biosynthesis; isopentenyl diphosphate biosynthesis via DXP pathway; isopentenyl diphosphate from 1-deoxy-D-xylulose 5-phosphate: step 2/6. Its function is as follows. Catalyzes the formation of 4-diphosphocytidyl-2-C-methyl-D-erythritol from CTP and 2-C-methyl-D-erythritol 4-phosphate (MEP). This chain is 2-C-methyl-D-erythritol 4-phosphate cytidylyltransferase, found in Bacillus cereus (strain ATCC 14579 / DSM 31 / CCUG 7414 / JCM 2152 / NBRC 15305 / NCIMB 9373 / NCTC 2599 / NRRL B-3711).